The sequence spans 265 residues: Neuronal membrane glycoprotein M6-b (265 aa).

The chain crosses the membrane as a helical span at residues 31 to 51; sequence GGVPYASLVATILCFSGVALF. Residue asparagine 73 is glycosylated (N-linked (GlcNAc...) asparagine). Transmembrane regions (helical) follow at residues 90–110 and 136–156; these read VIYGIASFFFLYVIILLAEGF and FVFLTYVLGVAWLGVFGFSAV. An N-linked (GlcNAc...) asparagine glycan is attached at asparagine 177. A helical transmembrane segment spans residues 224 to 244; it reads LFIVACAGAGATVIALLIYMM. A Phosphoserine modification is found at serine 257.

It belongs to the myelin proteolipid protein family. Interacts with SERT.

It localises to the membrane. The protein resides in the cell membrane. Its function is as follows. May be involved in neural development. Involved in regulation of osteoblast function and bone formation. Involved in matrix vesicle release by osteoblasts; this function seems to involve maintenance of the actin cytoskeleton. May be involved in cellular trafficking of SERT and thereby in regulation of serotonin uptake. This chain is Neuronal membrane glycoprotein M6-b (GPM6B), found in Pongo abelii (Sumatran orangutan).